A 298-amino-acid polypeptide reads, in one-letter code: Centromere protein O (298 aa).

Positions 29 to 49 (NISNRKSEEPAVRKKESSLRT) are disordered. A compositionally biased stretch (basic and acidic residues) spans 33–49 (RKSEEPAVRKKESSLRT). A Phosphoserine modification is found at Ser-35. A coiled-coil region spans residues 39 to 74 (AVRKKESSLRTKIRELRQQRDKLRAEVKQWGARVKE).

It belongs to the CENP-O/MCM21 family. As to quaternary structure, component of the CENPA-CAD complex, composed of CENPI, CENPK, CENPL, CENPO, CENPP, CENPQ, CENPR and CENPS. The CENPA-CAD complex interacts with the CENPA-NAC complex, at least composed of CENPA, CENPC, CENPH, CENPM, CENPN, CENPT and CENPU.

The protein resides in the nucleus. Its subcellular location is the chromosome. It localises to the centromere. It is found in the kinetochore. Functionally, component of the CENPA-CAD (nucleosome distal) complex, a complex recruited to centromeres which is involved in assembly of kinetochore proteins, mitotic progression and chromosome segregation. May be involved in incorporation of newly synthesized CENPA into centromeres via its interaction with the CENPA-NAC complex. Modulates the kinetochore-bound levels of NDC80 complex. This chain is Centromere protein O (Cenpo), found in Mus musculus (Mouse).